The following is a 106-amino-acid chain: CRISPR-associated endoribonuclease Cas2 (106 aa).

Asp22 contributes to the Mg(2+) binding site.

It belongs to the CRISPR-associated endoribonuclease Cas2 protein family. Homodimer, forms a heterotetramer with a Cas1 homodimer. Mg(2+) is required as a cofactor.

Its function is as follows. CRISPR (clustered regularly interspaced short palindromic repeat), is an adaptive immune system that provides protection against mobile genetic elements (viruses, transposable elements and conjugative plasmids). CRISPR clusters contain sequences complementary to antecedent mobile elements and target invading nucleic acids. CRISPR clusters are transcribed and processed into CRISPR RNA (crRNA). Functions as a ssRNA-specific endoribonuclease. Involved in the integration of spacer DNA into the CRISPR cassette. The protein is CRISPR-associated endoribonuclease Cas2 of Fusobacterium nucleatum subsp. nucleatum (strain ATCC 25586 / DSM 15643 / BCRC 10681 / CIP 101130 / JCM 8532 / KCTC 2640 / LMG 13131 / VPI 4355).